A 429-amino-acid chain; its full sequence is Adenylosuccinate synthetase (429 aa).

GTP is bound by residues 12-18 (GDEGKGK) and 40-42 (GHT). D13 serves as the catalytic Proton acceptor. Residues D13 and G40 each coordinate Mg(2+). Residues 13–16 (DEGK), 38–41 (NAGH), T129, R143, Q223, T238, and R302 contribute to the IMP site. The Proton donor role is filled by H41. 298-304 (VVTGRKR) serves as a coordination point for substrate. GTP is bound by residues R304, 330 to 332 (KLD), and 412 to 414 (STS).

The protein belongs to the adenylosuccinate synthetase family. In terms of assembly, homodimer. Mg(2+) is required as a cofactor.

It localises to the cytoplasm. It catalyses the reaction IMP + L-aspartate + GTP = N(6)-(1,2-dicarboxyethyl)-AMP + GDP + phosphate + 2 H(+). It functions in the pathway purine metabolism; AMP biosynthesis via de novo pathway; AMP from IMP: step 1/2. Plays an important role in the de novo pathway of purine nucleotide biosynthesis. Catalyzes the first committed step in the biosynthesis of AMP from IMP. The protein is Adenylosuccinate synthetase of Bartonella tribocorum (strain CIP 105476 / IBS 506).